Here is a 126-residue protein sequence, read N- to C-terminus: Large ribosomal subunit protein bL19 (126 aa).

This sequence belongs to the bacterial ribosomal protein bL19 family.

Functionally, this protein is located at the 30S-50S ribosomal subunit interface and may play a role in the structure and function of the aminoacyl-tRNA binding site. This chain is Large ribosomal subunit protein bL19, found in Albidiferax ferrireducens (strain ATCC BAA-621 / DSM 15236 / T118) (Rhodoferax ferrireducens).